Reading from the N-terminus, the 161-residue chain is Crossover junction endodeoxyribonuclease RuvC (161 aa).

Active-site residues include D9, E69, and H144. Mg(2+) is bound by residues D9, E69, and H144.

This sequence belongs to the RuvC family. As to quaternary structure, homodimer which binds Holliday junction (HJ) DNA. The HJ becomes 2-fold symmetrical on binding to RuvC with unstacked arms; it has a different conformation from HJ DNA in complex with RuvA. In the full resolvosome a probable DNA-RuvA(4)-RuvB(12)-RuvC(2) complex forms which resolves the HJ. The cofactor is Mg(2+).

It is found in the cytoplasm. It catalyses the reaction Endonucleolytic cleavage at a junction such as a reciprocal single-stranded crossover between two homologous DNA duplexes (Holliday junction).. Its function is as follows. The RuvA-RuvB-RuvC complex processes Holliday junction (HJ) DNA during genetic recombination and DNA repair. Endonuclease that resolves HJ intermediates. Cleaves cruciform DNA by making single-stranded nicks across the HJ at symmetrical positions within the homologous arms, yielding a 5'-phosphate and a 3'-hydroxyl group; requires a central core of homology in the junction. The consensus cleavage sequence is 5'-(A/T)TT(C/G)-3'. Cleavage occurs on the 3'-side of the TT dinucleotide at the point of strand exchange. HJ branch migration catalyzed by RuvA-RuvB allows RuvC to scan DNA until it finds its consensus sequence, where it cleaves and resolves the cruciform DNA. This chain is Crossover junction endodeoxyribonuclease RuvC, found in Borrelia turicatae (strain 91E135).